The following is a 307-amino-acid chain: Putative S-adenosyl-L-methionine-dependent methyltransferase MUL_4430 (307 aa).

Residues aspartate 128 and 157 to 158 each bind S-adenosyl-L-methionine; that span reads DL.

It belongs to the UPF0677 family.

Its function is as follows. Exhibits S-adenosyl-L-methionine-dependent methyltransferase activity. This is Putative S-adenosyl-L-methionine-dependent methyltransferase MUL_4430 from Mycobacterium ulcerans (strain Agy99).